Reading from the N-terminus, the 93-residue chain is Large ribosomal subunit protein uL23cz/uL23cy (93 aa).

Belongs to the universal ribosomal protein uL23 family. As to quaternary structure, part of the 50S ribosomal subunit.

The protein resides in the plastid. The protein localises to the chloroplast. Its function is as follows. Binds to 23S rRNA. The protein is Large ribosomal subunit protein uL23cz/uL23cy (rpl23-A) of Coffea arabica (Arabian coffee).